A 178-amino-acid polypeptide reads, in one-letter code: Ribosome maturation factor RimP (178 aa).

This sequence belongs to the RimP family.

The protein localises to the cytoplasm. In terms of biological role, required for maturation of 30S ribosomal subunits. The chain is Ribosome maturation factor RimP from Mycolicibacterium paratuberculosis (strain ATCC BAA-968 / K-10) (Mycobacterium paratuberculosis).